The sequence spans 452 residues: Probable ECA polymerase (452 aa).

The next 11 membrane-spanning stretches (helical) occupy residues 6–26 (FSGL…LTWF), 37–57 (VFFS…TSVL), 63–83 (VGVA…CFYG), 118–138 (VILM…NGFL), 155–175 (GVAL…VYFL), 181–201 (AWLF…MIVG), 207–227 (IIIA…ISLW), 228–248 (MLAA…LKRY), 341–361 (LVVM…GMII), 378–398 (YKAA…IVLA), and 410–430 (VFFL…FWLF).

This sequence belongs to the WzyE family. In terms of assembly, probably part of a complex composed of WzxE, WzyE and WzzE.

The protein resides in the cell inner membrane. It participates in bacterial outer membrane biogenesis; enterobacterial common antigen biosynthesis. Functionally, probably involved in the polymerization of enterobacterial common antigen (ECA) trisaccharide repeat units. The sequence is that of Probable ECA polymerase from Salmonella newport (strain SL254).